The sequence spans 107 residues: Iron-sulfur cluster assembly protein CyaY (107 aa).

It belongs to the frataxin family.

Functionally, involved in iron-sulfur (Fe-S) cluster assembly. May act as a regulator of Fe-S biogenesis. The polypeptide is Iron-sulfur cluster assembly protein CyaY (Neisseria meningitidis serogroup A / serotype 4A (strain DSM 15465 / Z2491)).